Reading from the N-terminus, the 253-residue chain is Probable glutathione transferase omega-2 (253 aa).

The GST N-terminal domain maps to 25 to 105 (GIYRIYNMRF…YLDDLFPESR (81 aa)). The active-site Nucleophile is the cysteine 35. Glutathione is bound by residues lysine 62, valine 75, and 89–90 (ES). Positions 110 to 238 (DPYEKVQQKL…SQPTEMGVGF (129 aa)) constitute a GST C-terminal domain.

This sequence belongs to the GST superfamily. Omega family.

The catalysed reaction is RX + glutathione = an S-substituted glutathione + a halide anion + H(+). It catalyses the reaction L-dehydroascorbate + 2 glutathione = glutathione disulfide + L-ascorbate. It carries out the reaction methylarsonate + 2 glutathione + H(+) = methylarsonous acid + glutathione disulfide + H2O. Exhibits glutathione-dependent thiol transferase activity. Has dehydroascorbate reductase activity and may contribute to the recycling of ascorbic acid. Participates in the biotransformation of inorganic arsenic and reduces monomethylarsonic acid (MMA). The sequence is that of Probable glutathione transferase omega-2 from Caenorhabditis briggsae.